Here is a 419-residue protein sequence, read N- to C-terminus: MHHQQSSYGGGYPGQAYRQQQPNNAYGYGQPSPQPYGSHHNGYNSPQQNYGPPSGGHMYQQQSAYQNSYNQGGHGIPARPPDQPVSFGQGAPQEYAYRYSACTGTRKALLIGINYFNQKGQLRGCINDVKNMSTYLHENFGYPRENMVLLTDDQQNPKSQPTKANILRAMHWLVKDAKPNDSLFFHYSGHGGQTPDLDGDEDDGYDEVIYPVDFRQAGHIVDDEMHRIMVNPLQPGVRLTAIFDSCHSGSALDLPYIYSTQGILKEPNLAKEAGQGLLGVVSAYARGDMGSMVSTAVGFFKKATKGDEVYERNKQTKTSGADVIMWSGSKDDQTSQDAQIQGQATGAMSWAFISALRKNPQQSYVQLLNSIRDELSTKYTQKPQLSCSHPLGDLIDVPVLGSGFIWFWVLSIFQCQATK.

A disordered region spans residues 1-89 (MHHQQSSYGG…PPDQPVSFGQ (89 aa)). A compositionally biased stretch (polar residues) spans 41–51 (NGYNSPQQNYG). The span at 59 to 71 (YQQQSAYQNSYNQ) shows a compositional bias: low complexity. Residues histidine 190 and cysteine 246 contribute to the active site.

This sequence belongs to the peptidase C14B family.

In terms of biological role, involved in cell death (apoptosis). This is Metacaspase-1A (casA) from Aspergillus oryzae (strain ATCC 42149 / RIB 40) (Yellow koji mold).